The following is a 441-amino-acid chain: Cysteine--tRNA ligase (441 aa).

C24 provides a ligand contact to Zn(2+). The short motif at 26–36 is the 'HIGH' region element; that stretch reads PTIYDYIHIGN. Zn(2+) is bound by residues C204, H230, and E234. The 'KMSKS' region signature appears at 262–266; that stretch reads KMSKS. K265 contributes to the ATP binding site.

It belongs to the class-I aminoacyl-tRNA synthetase family. As to quaternary structure, monomer. Zn(2+) is required as a cofactor.

It is found in the cytoplasm. It catalyses the reaction tRNA(Cys) + L-cysteine + ATP = L-cysteinyl-tRNA(Cys) + AMP + diphosphate. In Mesoplasma florum (strain ATCC 33453 / NBRC 100688 / NCTC 11704 / L1) (Acholeplasma florum), this protein is Cysteine--tRNA ligase.